Consider the following 331-residue polypeptide: 6-phosphogluconolactonase (331 aa).

This sequence belongs to the cycloisomerase 2 family.

The enzyme catalyses 6-phospho-D-glucono-1,5-lactone + H2O = 6-phospho-D-gluconate + H(+). It participates in carbohydrate degradation; pentose phosphate pathway; D-ribulose 5-phosphate from D-glucose 6-phosphate (oxidative stage): step 2/3. Catalyzes the hydrolysis of 6-phosphogluconolactone to 6-phosphogluconate. The chain is 6-phosphogluconolactonase from Salmonella paratyphi B (strain ATCC BAA-1250 / SPB7).